The sequence spans 116 residues: NADH-ubiquinone oxidoreductase chain 3 (116 aa).

3 consecutive transmembrane segments (helical) span residues 4 to 24 (LIITLITNSLLSTIIIIIAFW), 56 to 76 (FFLVAITFLLFDLEIALLLPL), and 88 to 108 (TLILSYCLIMLLTVGLAYEWI).

This sequence belongs to the complex I subunit 3 family. As to quaternary structure, core subunit of respiratory chain NADH dehydrogenase (Complex I) which is composed of 45 different subunits. Interacts with TMEM186. Interacts with TMEM242.

Its subcellular location is the mitochondrion inner membrane. It carries out the reaction a ubiquinone + NADH + 5 H(+)(in) = a ubiquinol + NAD(+) + 4 H(+)(out). In terms of biological role, core subunit of the mitochondrial membrane respiratory chain NADH dehydrogenase (Complex I) which catalyzes electron transfer from NADH through the respiratory chain, using ubiquinone as an electron acceptor. Essential for the catalytic activity of complex I. The chain is NADH-ubiquinone oxidoreductase chain 3 from Didelphis virginiana (North American opossum).